The following is a 622-amino-acid chain: Leucine-rich repeat and immunoglobulin-like domain-containing nogo receptor-interacting protein 1-B (622 aa).

Positions 1-43 are cleaved as a signal peptide; that stretch reads MTFLQVTIKMVAREASGHSYLVACWQPILILMLGTVLSGSATG. Disulfide bonds link C44–C50 and C48–C59. The LRRNT domain maps to 44 to 73; it reads CPSRCECSAQERSVVCHRRKLITLPEGIPI. The Extracellular portion of the chain corresponds to 44 to 563; the sequence is CPSRCECSAQ…FDMKTLIIAT (520 aa). LRR repeat units lie at residues 74–95, 98–119, 122–143, 146–167, 170–191, 194–215, 218–239, 266–287, 290–311, 314–335, and 338–359; these read DTRL…EFLN, QLED…AFSN, GLRT…VFTG, NLTR…MFQE, NLKE…AFHG, SLEQ…AFSH, NLLT…SFRR, NITT…AIQH, YLRF…KMHN, RLQA…SFKG, and YLRV…AFHS. N146 carries N-linked (GlcNAc...) asparagine glycosylation. N-linked (GlcNAc...) asparagine glycosylation occurs at N204. 3 N-linked (GlcNAc...) asparagine glycosylation sites follow: N266, N276, and N295. The N-linked (GlcNAc...) asparagine glycan is linked to N343. One can recognise an LRRCT domain in the interval 371-425; that stretch reads NPLACDCRLLWVFRRRWRLNFNRQQPSCETPEFLQGKEFKDFPDVLPPNYFTCQK. 3 disulfides stabilise this stretch: C375–C398, C377–C423, and C448–C499. The region spanning 413-515 is the Ig-like C2-type domain; the sequence is PDVLPPNYFT…GNDTRLAHLH (103 aa). Residues N494, N507, N528, and N544 are each glycosylated (N-linked (GlcNAc...) asparagine). Residues 564–584 traverse the membrane as a helical segment; sequence TMGFISFLGVVLFCLVLLFLW. The Cytoplasmic portion of the chain corresponds to 585-622; that stretch reads SRGKGNAKPNIEIEYVPRKVDGENSPNEGSHKISMKMI.

The protein resides in the cell membrane. May play a role in regulating axonal regeneration and plasticity in the adult central nervous system. This chain is Leucine-rich repeat and immunoglobulin-like domain-containing nogo receptor-interacting protein 1-B (lingo1b), found in Danio rerio (Zebrafish).